A 324-amino-acid chain; its full sequence is Endochitinase B (324 aa).

The N-terminal stretch at 1–23 (MRLREFTALSSLLFSLLLLSASA) is a signal peptide. Residues 24 to 65 (EQCGSQAGGARCASGLCCSKFGWCGNTNDYCGPGNCQSQCPG) form the Chitin-binding type-1 domain. 4 disulfides stabilise this stretch: Cys-26–Cys-41, Cys-35–Cys-47, Cys-40–Cys-54, and Cys-59–Cys-63. A 4-hydroxyproline mark is found at Pro-67 and Pro-69. Disulfide bonds link Cys-96/Cys-158, Cys-170/Cys-178, and Cys-277/Cys-309. Glu-140 functions as the Proton donor in the catalytic mechanism. The propeptide at 318 to 324 (GLLVDTM) is removed in mature form.

The protein belongs to the glycosyl hydrolase 19 family. Chitinase class I subfamily. Post-translationally, the 4-hydroxyproline residues are not glycosylated in this plant vacuolar protein.

It localises to the vacuole. It catalyses the reaction Random endo-hydrolysis of N-acetyl-beta-D-glucosaminide (1-&gt;4)-beta-linkages in chitin and chitodextrins.. Functionally, defense against chitin-containing fungal pathogens. This chain is Endochitinase B (CHN50), found in Nicotiana tabacum (Common tobacco).